The following is a 262-amino-acid chain: Octopine permease ATP-binding protein P (262 aa).

The region spanning 9 to 254 (VQLKDIRKNF…PRTDRFRQFL (246 aa)) is the ABC transporter domain. Position 41–48 (41–48 (GSSGSGKS)) interacts with ATP.

The protein belongs to the ABC transporter superfamily.

The protein resides in the cell inner membrane. Functionally, component of the octopine active transport system probably consisting of four subunits: Q, M, P and T. The sequence is that of Octopine permease ATP-binding protein P (occP) from Rhizobium radiobacter (Agrobacterium tumefaciens).